A 322-amino-acid polypeptide reads, in one-letter code: Chemokine XC receptor 1 (322 aa).

At 1–27 (MESSTAFYDYHDKLSLLCENNVIFFST) the chain is on the extracellular side. Residues 28–55 (ISTIVLYSLVFLLSLVGNSLVLWVLVKY) traverse the membrane as a helical segment. Residues 56 to 65 (ENLESLTNIF) are Cytoplasmic-facing. A helical transmembrane segment spans residues 66 to 85 (ILNLCLSDLMFSCLLPVLIS). Residues 86 to 98 (AQWSWFLGDFFCK) lie on the Extracellular side of the membrane. Residues cysteine 97 and cysteine 170 are joined by a disulfide bond. A helical membrane pass occupies residues 99–120 (FFNMIFGISLYSSIFFLTIMTI). Residues 121 to 137 (HRYLSVVSPISTLGIHT) are Cytoplasmic-facing. A helical membrane pass occupies residues 138–162 (LRCRVLVTSCVWAASILFSIPDAVF). At 163–185 (HKVISLNCKYSEHHGFLASVYQH) the chain is on the extracellular side. The helical transmembrane segment at 186–204 (NIFFLLSMGIILFCYVQIL) threads the bilayer. The Cytoplasmic portion of the chain corresponds to 205-220 (RTLFRTRSRQRHRTVR). A helical membrane pass occupies residues 221–243 (LIFTVVVAYFLSWAPYNLTLFLK). The Extracellular portion of the chain corresponds to 244–259 (TGIIQQSCESLQQLDI). The chain crosses the membrane as a helical span at residues 260–283 (AMIICRHLAFSHCCFNPVLYVFVG). The Cytoplasmic segment spans residues 284–322 (IKFRRHLKHLFQQVWLCRKTSSTVPCSPGTFTYEGPSFY).

This sequence belongs to the G-protein coupled receptor 1 family. In terms of tissue distribution, expressed by dendritic cells from the thymus, slpeen, subcutaneous lymph nodes and mesenteric lymph nodes.

The protein resides in the cell membrane. In terms of biological role, receptor for chemokines SCYC1 and SCYC2. Subsequently transduces a signal by increasing the intracellular calcium ions level. Receptor for XCL1/Lymphotactin. This is Chemokine XC receptor 1 (Xcr1) from Mus musculus (Mouse).